The sequence spans 467 residues: Probable Xaa-Pro aminopeptidase pepP (467 aa).

Residues Asp-264, Asp-275, Glu-398, and Glu-438 each contribute to the Mn(2+) site.

This sequence belongs to the peptidase M24B family. Mn(2+) is required as a cofactor.

The enzyme catalyses Release of any N-terminal amino acid, including proline, that is linked to proline, even from a dipeptide or tripeptide.. Functionally, catalyzes the removal of a penultimate prolyl residue from the N-termini of peptides. The chain is Probable Xaa-Pro aminopeptidase pepP (pepP) from Neosartorya fischeri (strain ATCC 1020 / DSM 3700 / CBS 544.65 / FGSC A1164 / JCM 1740 / NRRL 181 / WB 181) (Aspergillus fischerianus).